The chain runs to 494 residues: MNNSVDFGGRPFHFIGIGGIGMSALAYVLAKRQLPVSGSDLRPNHITRKLESIGAHIFSRQEASNLEFFGSKVSSTEIELNTQEMFPLGKSTLPQVVCSTAINSNNLEYQAAIELGCPILHRSDVLAALINDYHSVAVAGTHGKTTTSSMIGYMLLEAGLDPTIIVGGEVNAWEGNARLGQSPYLVAEADESDGSLVKHAPEIGIITNIELDHPDHYDTLEEVVDIFQTFAKGCKTLIGSVDCATVRELLRTAASDRQQPTITYSLHQDTEADYTVTNIDCRADGTTALVWEKGKALGVLKLKLLSRHNLSNALAAVAVGRLVGLEFGEIAKGIAGFEGARRRFEFRGEVDGITFIDDYAHHPSEIRATLAAARLQARPGQRVVAIFQPHRYSRTLTFLEEFSESFSHADLVVLTDIYSAGEPNLGLISGEQLAEKIAQEHPQVVYQPTLSTVCEYLLKNLRPGDLALFLGAGNLNQAIPEIITTLCEPATATL.

140 to 146 (GTHGKTT) contacts ATP.

The protein belongs to the MurCDEF family.

It is found in the cytoplasm. It carries out the reaction UDP-N-acetyl-alpha-D-muramate + L-alanine + ATP = UDP-N-acetyl-alpha-D-muramoyl-L-alanine + ADP + phosphate + H(+). It participates in cell wall biogenesis; peptidoglycan biosynthesis. Cell wall formation. In Trichormus variabilis (strain ATCC 29413 / PCC 7937) (Anabaena variabilis), this protein is UDP-N-acetylmuramate--L-alanine ligase.